We begin with the raw amino-acid sequence, 119 residues long: Putative transmembrane protein ORF119 (119 aa).

Helical transmembrane passes span 9 to 29, 73 to 93, and 95 to 115; these read TLAI…PAMV, QYAG…SIFT, and PIAL…AFYY.

The protein localises to the host membrane. The sequence is that of Putative transmembrane protein ORF119 from Acidianus convivator (ATV).